The following is a 206-amino-acid chain: Small ribosomal subunit protein uS4 (206 aa).

One can recognise an S4 RNA-binding domain in the interval 96–156; that stretch reads GRLDNVVYRM…EKAKKQARIK (61 aa).

It belongs to the universal ribosomal protein uS4 family. In terms of assembly, part of the 30S ribosomal subunit. Contacts protein S5. The interaction surface between S4 and S5 is involved in control of translational fidelity.

Functionally, one of the primary rRNA binding proteins, it binds directly to 16S rRNA where it nucleates assembly of the body of the 30S subunit. Its function is as follows. With S5 and S12 plays an important role in translational accuracy. The sequence is that of Small ribosomal subunit protein uS4 from Aeromonas hydrophila subsp. hydrophila (strain ATCC 7966 / DSM 30187 / BCRC 13018 / CCUG 14551 / JCM 1027 / KCTC 2358 / NCIMB 9240 / NCTC 8049).